The following is a 319-amino-acid chain: Lipoyl synthase (319 aa).

The segment at 1–32 (MVVLVDTVSSTPVRPRHPEKAARPDSLSPKKP) is disordered. A compositionally biased stretch (basic and acidic residues) spans 16 to 32 (RHPEKAARPDSLSPKKP). Residues Cys-61, Cys-66, Cys-72, Cys-87, Cys-91, Cys-94, and Ser-300 each coordinate [4Fe-4S] cluster. The 217-residue stretch at 73 to 289 (WDKKHATFMI…GKTAYAKGFL (217 aa)) folds into the Radical SAM core domain.

This sequence belongs to the radical SAM superfamily. Lipoyl synthase family. [4Fe-4S] cluster serves as cofactor.

Its subcellular location is the cytoplasm. It carries out the reaction [[Fe-S] cluster scaffold protein carrying a second [4Fe-4S](2+) cluster] + N(6)-octanoyl-L-lysyl-[protein] + 2 oxidized [2Fe-2S]-[ferredoxin] + 2 S-adenosyl-L-methionine + 4 H(+) = [[Fe-S] cluster scaffold protein] + N(6)-[(R)-dihydrolipoyl]-L-lysyl-[protein] + 4 Fe(3+) + 2 hydrogen sulfide + 2 5'-deoxyadenosine + 2 L-methionine + 2 reduced [2Fe-2S]-[ferredoxin]. Its pathway is protein modification; protein lipoylation via endogenous pathway; protein N(6)-(lipoyl)lysine from octanoyl-[acyl-carrier-protein]: step 2/2. Catalyzes the radical-mediated insertion of two sulfur atoms into the C-6 and C-8 positions of the octanoyl moiety bound to the lipoyl domains of lipoate-dependent enzymes, thereby converting the octanoylated domains into lipoylated derivatives. The sequence is that of Lipoyl synthase from Rhodopseudomonas palustris (strain BisB5).